Consider the following 388-residue polypeptide: 3-dehydroquinate synthase (388 aa).

Belongs to the archaeal-type DHQ synthase family.

The enzyme catalyses 2-amino-2,3,7-trideoxy-D-lyxo-hept-6-ulosonate + NAD(+) + H2O = 3-dehydroquinate + NH4(+) + NADH + H(+). Functionally, catalyzes the oxidative deamination and cyclization of 2-amino-3,7-dideoxy-D-threo-hept-6-ulosonic acid (ADH) to yield 3-dehydroquinate (DHQ), which is fed into the canonical shikimic pathway of aromatic amino acid biosynthesis. This chain is 3-dehydroquinate synthase, found in Natronomonas pharaonis (strain ATCC 35678 / DSM 2160 / CIP 103997 / JCM 8858 / NBRC 14720 / NCIMB 2260 / Gabara) (Halobacterium pharaonis).